The primary structure comprises 294 residues: Probable aspartoacylase (294 aa).

2 residues coordinate Zn(2+): histidine 14 and glutamate 17. Residues arginine 56 and 63-64 each bind substrate; that span reads NR. Histidine 106 lines the Zn(2+) pocket. Substrate-binding residues include glutamate 164 and tyrosine 275.

It belongs to the AspA/AstE family. Aspartoacylase subfamily. Zn(2+) serves as cofactor.

It catalyses the reaction an N-acyl-L-aspartate + H2O = a carboxylate + L-aspartate. This chain is Probable aspartoacylase, found in Nostoc sp. (strain PCC 7120 / SAG 25.82 / UTEX 2576).